We begin with the raw amino-acid sequence, 253 residues long: Methionine aminopeptidase A (253 aa).

H80 contributes to the substrate binding site. Residues D98, D109, and H172 each contribute to the a divalent metal cation site. Substrate is bound at residue H179. Residues E205 and E236 each contribute to the a divalent metal cation site.

This sequence belongs to the peptidase M24A family. Methionine aminopeptidase type 1 subfamily. In terms of assembly, monomer. Co(2+) is required as a cofactor. Zn(2+) serves as cofactor. The cofactor is Mn(2+). Requires Fe(2+) as cofactor.

It catalyses the reaction Release of N-terminal amino acids, preferentially methionine, from peptides and arylamides.. In terms of biological role, removes the N-terminal methionine from nascent proteins. The N-terminal methionine is often cleaved when the second residue in the primary sequence is small and uncharged (Met-Ala-, Cys, Gly, Pro, Ser, Thr, or Val). Requires deformylation of the N(alpha)-formylated initiator methionine before it can be hydrolyzed. This chain is Methionine aminopeptidase A, found in Synechocystis sp. (strain ATCC 27184 / PCC 6803 / Kazusa).